Here is a 170-residue protein sequence, read N- to C-terminus: Small ribosomal subunit protein bS18c (170 aa).

The interval 1–61 is disordered; sequence MYTSKQPFLK…RRPRIGPGDR (61 aa). The segment covering 13 to 26 has biased composition (polar residues); that stretch reads QPFSKSKQTFNKSK. The span at 27–55 shows a compositional bias: basic residues; that stretch reads QPFRKSKQTFRKFKQPFRKSKQPFRRRPR.

This sequence belongs to the bacterial ribosomal protein bS18 family. As to quaternary structure, part of the 30S ribosomal subunit.

It is found in the plastid. The protein resides in the chloroplast. The protein is Small ribosomal subunit protein bS18c of Hordeum vulgare (Barley).